Consider the following 296-residue polypeptide: Protoheme IX farnesyltransferase (296 aa).

Helical transmembrane passes span 14–34 (IIFG…KGVI), 36–56 (YPLF…GCVF), 75–95 (VLVK…ILGI), 99–119 (LLLY…GFVI), 133–153 (VYGT…GYCA), 163–183 (LILL…IAIF), 209–229 (ITLY…SGYA), 234–254 (LVVA…GYKA), and 265–285 (FVFS…DFNV).

Belongs to the UbiA prenyltransferase family. Protoheme IX farnesyltransferase subfamily.

It localises to the cell inner membrane. The enzyme catalyses heme b + (2E,6E)-farnesyl diphosphate + H2O = Fe(II)-heme o + diphosphate. Its pathway is porphyrin-containing compound metabolism; heme O biosynthesis; heme O from protoheme: step 1/1. Converts heme B (protoheme IX) to heme O by substitution of the vinyl group on carbon 2 of heme B porphyrin ring with a hydroxyethyl farnesyl side group. The protein is Protoheme IX farnesyltransferase of Yersinia enterocolitica serotype O:8 / biotype 1B (strain NCTC 13174 / 8081).